The following is a 373-amino-acid chain: tRNA-specific 2-thiouridylase MnmA (373 aa).

ATP contacts are provided by residues 12 to 19 (GMSGGVDS) and methionine 38. The interval 98-100 (NPD) is interaction with target base in tRNA. Cysteine 103 functions as the Nucleophile in the catalytic mechanism. An intrachain disulfide couples cysteine 103 to cysteine 200. ATP is bound at residue glycine 127. The interaction with tRNA stretch occupies residues 150–152 (KDQ). Cysteine 200 serves as the catalytic Cysteine persulfide intermediate. The interaction with tRNA stretch occupies residues 312-313 (RY).

The protein belongs to the MnmA/TRMU family.

The protein resides in the cytoplasm. The enzyme catalyses S-sulfanyl-L-cysteinyl-[protein] + uridine(34) in tRNA + AH2 + ATP = 2-thiouridine(34) in tRNA + L-cysteinyl-[protein] + A + AMP + diphosphate + H(+). In terms of biological role, catalyzes the 2-thiolation of uridine at the wobble position (U34) of tRNA, leading to the formation of s(2)U34. This Streptococcus agalactiae serotype Ia (strain ATCC 27591 / A909 / CDC SS700) protein is tRNA-specific 2-thiouridylase MnmA.